Here is a 270-residue protein sequence, read N- to C-terminus: D-aminoacyl-tRNA deacylase (270 aa).

This sequence belongs to the DtdA deacylase family. In terms of assembly, monomer. Zn(2+) serves as cofactor.

The enzyme catalyses a D-aminoacyl-tRNA + H2O = a tRNA + a D-alpha-amino acid + H(+). It carries out the reaction glycyl-tRNA(Ala) + H2O = tRNA(Ala) + glycine + H(+). Functionally, D-aminoacyl-tRNA deacylase with broad substrate specificity. By recycling D-aminoacyl-tRNA to D-amino acids and free tRNA molecules, this enzyme counteracts the toxicity associated with the formation of D-aminoacyl-tRNA entities in vivo. The chain is D-aminoacyl-tRNA deacylase from Pyrococcus furiosus (strain ATCC 43587 / DSM 3638 / JCM 8422 / Vc1).